The following is a 143-amino-acid chain: Ribosome maturation factor RimP (143 aa).

It belongs to the RimP family.

It localises to the cytoplasm. Its function is as follows. Required for maturation of 30S ribosomal subunits. In Neisseria gonorrhoeae (strain ATCC 700825 / FA 1090), this protein is Ribosome maturation factor RimP.